A 236-amino-acid polypeptide reads, in one-letter code: MEELCFDNQRIWFDPNLLQEDPKACFDASFWQQQGKVIGSAQGRGTTWFVQGETLPMALRHYRRGGLFGKLIEDAYVFTGWEKTRCAEEVALLSTLAVGGVNVPRPVAARATRHGLVYRADLLVEKIDSAKDLVDLLQQAMLPDHVWYAIGRTVRKMHDLQVCHTDLNAHNILVDSRELVWLIDFDKCYTQEGEAWKAKNLSRLHRSFVKEQGKRNIHFSATSWQVLCQGYELPDN.

The active site involves aspartate 166.

The protein belongs to the protein kinase superfamily. KdkA/RfaP family.

Its subcellular location is the cell inner membrane. The catalysed reaction is an alpha-Kdo-(2-&gt;6)-lipid IVA + ATP = a 4-O-phospho-alpha-Kdo-(2-&gt;6)-lipid IVA + ADP + H(+). The protein operates within bacterial outer membrane biogenesis; LPS core biosynthesis. Catalyzes the ATP-dependent phosphorylation of the 3-deoxy-D-manno-octulosonic acid (Kdo) residue in Kdo-lipid IV(A) at the 4-OH position. The polypeptide is 3-deoxy-D-manno-octulosonic acid kinase (Photobacterium profundum (strain SS9)).